The primary structure comprises 544 residues: Chaperonin GroEL (544 aa).

ATP is bound by residues 29 to 32 (TLGP), 86 to 90 (DGTTT), glycine 413, 476 to 478 (NAA), and aspartate 492.

The protein belongs to the chaperonin (HSP60) family. In terms of assembly, forms a cylinder of 14 subunits composed of two heptameric rings stacked back-to-back. Interacts with the co-chaperonin GroES.

The protein resides in the cytoplasm. It catalyses the reaction ATP + H2O + a folded polypeptide = ADP + phosphate + an unfolded polypeptide.. In terms of biological role, together with its co-chaperonin GroES, plays an essential role in assisting protein folding. The GroEL-GroES system forms a nano-cage that allows encapsulation of the non-native substrate proteins and provides a physical environment optimized to promote and accelerate protein folding. The sequence is that of Chaperonin GroEL from Halalkalibacterium halodurans (strain ATCC BAA-125 / DSM 18197 / FERM 7344 / JCM 9153 / C-125) (Bacillus halodurans).